The chain runs to 742 residues: Probable LRR receptor-like serine/threonine-protein kinase At2g02780 (742 aa).

The first 25 residues, 1–25 (MQISLQIHLSSFTFLLLIFLLPVLS), serve as a signal peptide directing secretion. Residues 26 to 354 (ESQVASSESQ…KDSARIKLGL (329 aa)) are Extracellular-facing. 9 LRR repeats span residues 74 to 96 (HGHV…SFHK), 104 to 128 (LSSL…IITK), 130 to 154 (SPSL…IVSL), 156 to 177 (NLKS…DLRG), 178 to 204 (LSNL…KLTT), 206 to 223 (SLKN…IKKL), 224 to 247 (NNLQ…LFSI), 249 to 271 (SLQI…SCTS), and 273 to 294 (KIIT…CYSS). N-linked (GlcNAc...) asparagine glycosylation occurs at Asn-85. A glycan (N-linked (GlcNAc...) asparagine) is linked at Asn-137. N-linked (GlcNAc...) asparagine glycosylation occurs at Asn-209. A glycan (N-linked (GlcNAc...) asparagine) is linked at Asn-266. The N-linked (GlcNAc...) asparagine glycan is linked to Asn-299. The chain crosses the membrane as a helical span at residues 355-375 (VILIIIGVIILAAILVLLVLI). Topologically, residues 376–742 (ALKRRRSRSE…HESSMKAIYE (367 aa)) are cytoplasmic. The disordered stretch occupies residues 386–424 (DDPFEVNNSNNERHASDKVSVCSTTTASSKSLPDSRRVP). Residues 406–417 (VCSTTTASSKSL) show a composition bias toward polar residues. In terms of domain architecture, Protein kinase spans 426-720 (TMRSAVIGLP…DVVWNLQYTI (295 aa)).

It belongs to the protein kinase superfamily. Ser/Thr protein kinase family.

It is found in the membrane. It carries out the reaction L-seryl-[protein] + ATP = O-phospho-L-seryl-[protein] + ADP + H(+). The catalysed reaction is L-threonyl-[protein] + ATP = O-phospho-L-threonyl-[protein] + ADP + H(+). This chain is Probable LRR receptor-like serine/threonine-protein kinase At2g02780, found in Arabidopsis thaliana (Mouse-ear cress).